A 281-amino-acid polypeptide reads, in one-letter code: NAC domain-containing protein 6 (281 aa).

An NAC domain is found at 4–156 (LPVGSRFCPT…QDALTGFADQ (153 aa)). 2 disordered regions span residues 84–109 (GGSE…QKGD) and 211–249 (LEGH…VTQE). A compositionally biased stretch (basic and acidic residues) spans 94-109 (NDGKKEIKDGHMQKGD). A DNA-binding region spans residues 109–162 (DGLRASDDLQKVVLCRIRYKKEANVNEFGLVNHQAHQTQDALTGFADQLEMMLE). The span at 229–239 (QQQQQQQQQQQ) shows a compositional bias: low complexity.

Its subcellular location is the nucleus. The polypeptide is NAC domain-containing protein 6 (NAC006) (Arabidopsis thaliana (Mouse-ear cress)).